The sequence spans 614 residues: Probable glycerol-3-phosphate dehydrogenase (614 aa).

57-85 is an FAD binding site; that stretch reads DLVVVGGGSTGAGCALDGATRGLKVALVD. A disordered region spans residues 595-614; it reads MECPEEKRHRGERRLPPQEK. The segment covering 598–614 has biased composition (basic and acidic residues); sequence PEEKRHRGERRLPPQEK.

This sequence belongs to the FAD-dependent glycerol-3-phosphate dehydrogenase family. FAD is required as a cofactor.

It is found in the cytoplasm. It carries out the reaction a quinone + sn-glycerol 3-phosphate = dihydroxyacetone phosphate + a quinol. The protein operates within polyol metabolism; glycerol degradation via glycerol kinase pathway; glycerone phosphate from sn-glycerol 3-phosphate (anaerobic route): step 1/1. The polypeptide is Probable glycerol-3-phosphate dehydrogenase (Encephalitozoon cuniculi (strain GB-M1) (Microsporidian parasite)).